We begin with the raw amino-acid sequence, 519 residues long: Putative cysteine ligase BshC (519 aa).

Coiled coils occupy residues 51–71 (LNAL…SLKE) and 440–464 (TKLN…HEQA).

The protein belongs to the BshC family.

Its function is as follows. Involved in bacillithiol (BSH) biosynthesis. May catalyze the last step of the pathway, the addition of cysteine to glucosamine malate (GlcN-Mal) to generate BSH. The polypeptide is Putative cysteine ligase BshC (Exiguobacterium sibiricum (strain DSM 17290 / CCUG 55495 / CIP 109462 / JCM 13490 / 255-15)).